A 203-amino-acid chain; its full sequence is 3-isopropylmalate dehydratase small subunit (203 aa).

It belongs to the LeuD family. LeuD type 1 subfamily. In terms of assembly, heterodimer of LeuC and LeuD.

It carries out the reaction (2R,3S)-3-isopropylmalate = (2S)-2-isopropylmalate. It participates in amino-acid biosynthesis; L-leucine biosynthesis; L-leucine from 3-methyl-2-oxobutanoate: step 2/4. Its function is as follows. Catalyzes the isomerization between 2-isopropylmalate and 3-isopropylmalate, via the formation of 2-isopropylmaleate. The polypeptide is 3-isopropylmalate dehydratase small subunit (Phenylobacterium zucineum (strain HLK1)).